We begin with the raw amino-acid sequence, 145 residues long: LIM domain only protein 3 (145 aa).

2 consecutive LIM zinc-binding domains span residues 11–73 and 75–137; these read KGCA…LFGT and GNCA…GLMK.

This is LIM domain only protein 3 (Lmo3) from Rattus norvegicus (Rat).